Reading from the N-terminus, the 212-residue chain is uncharacterized protein (212 aa).

S-adenosyl-L-methionine contacts are provided by Gly-53, Glu-74, and Asp-97.

This sequence belongs to the methyltransferase superfamily. YrrT family.

Its function is as follows. Could be a S-adenosyl-L-methionine-dependent methyltransferase. This is an uncharacterized protein from Bacillus cytotoxicus (strain DSM 22905 / CIP 110041 / 391-98 / NVH 391-98).